A 465-amino-acid chain; its full sequence is Glycine-rich cell wall structural protein 1.8 (465 aa).

Positions 1-30 (MATIHRLPSLVFLVLLALGVCSARRALLTL) are cleaved as a signal peptide. Repeat copies occupy residues 205 to 226 (HGGGGGGGQGGGAGGGYGAGGE), 227 to 248 (HGGGAGGGQGGGAGGGYGAGGE), 249 to 270 (HGGGAGGGQGGGAGGGYGAGGE), 271 to 292 (HGGGAGGGQGGGAGGGYGAGGE), 293 to 314 (HGGGAGGGQGGGAGGGYGAGGE), 315 to 336 (HGGGGGGGQGGGAGGGYAAVGE), 337 to 358 (HGGGYGGGQGGGDGGGYGTGGE), and 359 to 380 (HGGGYGGGQGGGAGGGYGTGGE). The tract at residues 205 to 380 (HGGGGGGGQG…AGGGYGTGGE (176 aa)) is 8 X 22 AA tandem repeats of H-G-G-G-[GAY]-G-G-G-Q-G-G-G-[AD]-G-G-G-Y-[GA]-[AT]-[GV]-G-E.

In terms of tissue distribution, expressed in young hypocotyls.

It is found in the secreted. The protein resides in the cell wall. In terms of biological role, responsible for plasticity of the cell wall. This Phaseolus vulgaris (Kidney bean) protein is Glycine-rich cell wall structural protein 1.8.